Consider the following 173-residue polypeptide: CASP-like protein 3A1 (173 aa).

Position 1 (Met-1) is a topological domain, cytoplasmic. A helical transmembrane segment spans residues Val-2–Phe-22. Topologically, residues Thr-23–Pro-48 are extracellular. N-linked (GlcNAc...) asparagine glycosylation occurs at Asn-44. Residues Phe-49–Tyr-69 form a helical membrane-spanning segment. Residues Gln-70–Cys-84 are Cytoplasmic-facing. The helical transmembrane segment at Ile-85–Ala-105 threads the bilayer. Residues Ala-106–Arg-140 lie on the Extracellular side of the membrane. N-linked (GlcNAc...) asparagine glycosylation is present at Asn-113. Residues Ala-141–Leu-161 traverse the membrane as a helical segment. The Cytoplasmic portion of the chain corresponds to Asp-162–Gly-173.

It belongs to the Casparian strip membrane proteins (CASP) family. Homodimer and heterodimers.

The protein resides in the cell membrane. The sequence is that of CASP-like protein 3A1 from Pteridium aquilinum subsp. aquilinum (Bracken fern).